Here is a 159-residue protein sequence, read N- to C-terminus: 2-C-methyl-D-erythritol 2,4-cyclodiphosphate synthase (159 aa).

A divalent metal cation is bound by residues aspartate 10 and histidine 12. 4-CDP-2-C-methyl-D-erythritol 2-phosphate contacts are provided by residues 10 to 12 and 37 to 38; these read DVH and HS. A divalent metal cation is bound at residue histidine 45. Residues 59–61, 64–68, 103–109, 135–138, phenylalanine 142, and arginine 145 contribute to the 4-CDP-2-C-methyl-D-erythritol 2-phosphate site; these read DIG, FLDTD, AQAPKML, and TTTE.

It belongs to the IspF family. As to quaternary structure, homotrimer. A divalent metal cation serves as cofactor.

It carries out the reaction 4-CDP-2-C-methyl-D-erythritol 2-phosphate = 2-C-methyl-D-erythritol 2,4-cyclic diphosphate + CMP. It functions in the pathway isoprenoid biosynthesis; isopentenyl diphosphate biosynthesis via DXP pathway; isopentenyl diphosphate from 1-deoxy-D-xylulose 5-phosphate: step 4/6. Involved in the biosynthesis of isopentenyl diphosphate (IPP) and dimethylallyl diphosphate (DMAPP), two major building blocks of isoprenoid compounds. Catalyzes the conversion of 4-diphosphocytidyl-2-C-methyl-D-erythritol 2-phosphate (CDP-ME2P) to 2-C-methyl-D-erythritol 2,4-cyclodiphosphate (ME-CPP) with a corresponding release of cytidine 5-monophosphate (CMP). This chain is 2-C-methyl-D-erythritol 2,4-cyclodiphosphate synthase, found in Francisella tularensis subsp. holarctica (strain OSU18).